A 63-amino-acid chain; its full sequence is Beta-defensin 5 (63 aa).

The signal sequence occupies residues Met-1–Thr-22. Residue Gln-23 is modified to Pyrrolidone carboxylic acid. Disulfide bonds link Cys-31-Cys-59, Cys-38-Cys-52, and Cys-42-Cys-60.

The protein belongs to the beta-defensin family.

The protein localises to the secreted. Functionally, has antibacterial activity. The chain is Beta-defensin 5 (Defb5) from Rattus norvegicus (Rat).